Consider the following 256-residue polypeptide: Protein FixA (256 aa).

It belongs to the ETF beta-subunit/FixA family. Heterodimer of FixA and FixB.

It participates in amine and polyamine metabolism; carnitine metabolism. Required for anaerobic carnitine reduction. May bring reductant to CaiA. The protein is Protein FixA of Salmonella agona (strain SL483).